The primary structure comprises 206 residues: RNA pyrophosphohydrolase (206 aa).

The region spanning 6-150 (GYRPNVGIVI…KRDVYRKVMK (145 aa)) is the Nudix hydrolase domain. Positions 38 to 59 (GGINEGENIETAMYRELYEEVG) match the Nudix box motif. The segment covering 162–191 (KPETVEKPRVERTEKRDFQKRDNQKREFRK) has biased composition (basic and acidic residues). Residues 162–206 (KPETVEKPRVERTEKRDFQKRDNQKREFRKSARTWNNSHQKGKAQ) are disordered.

Belongs to the Nudix hydrolase family. RppH subfamily. Requires a divalent metal cation as cofactor.

Accelerates the degradation of transcripts by removing pyrophosphate from the 5'-end of triphosphorylated RNA, leading to a more labile monophosphorylated state that can stimulate subsequent ribonuclease cleavage. The protein is RNA pyrophosphohydrolase of Actinobacillus pleuropneumoniae serotype 3 (strain JL03).